The primary structure comprises 456 residues: Argininosuccinate lyase (456 aa).

The protein belongs to the lyase 1 family. Argininosuccinate lyase subfamily.

It localises to the cytoplasm. It catalyses the reaction 2-(N(omega)-L-arginino)succinate = fumarate + L-arginine. It functions in the pathway amino-acid biosynthesis; L-arginine biosynthesis; L-arginine from L-ornithine and carbamoyl phosphate: step 3/3. The polypeptide is Argininosuccinate lyase (Carboxydothermus hydrogenoformans (strain ATCC BAA-161 / DSM 6008 / Z-2901)).